The chain runs to 1148 residues: Signal transducer and activator of transcription B (1148 aa).

The span at 1–36 (MEVTNNGSNNSSTIASTNPPTSPSTTSTSKSLPPLS) shows a compositional bias: low complexity. Disordered stretches follow at residues 1-81 (MEVT…NNNN), 93-178 (SSSN…LSSS), 268-312 (NTNN…PSNG), 403-425 (KNNI…NSLL), and 453-645 (YDYN…KTVT). Over residues 37-47 (FLNSQWENKQS) the composition is skewed to polar residues. 3 stretches are compositionally biased toward low complexity: residues 48–81 (NNNN…NNNN), 106–178 (NNNN…LSSS), and 268–298 (NTNN…NNNN). The span at 466 to 517 (SNSSNNNSSNNNSNNNNNNNSNNNNNIIGSISPPHSSQLQQVSSPQQQQQQQ) shows a compositional bias: low complexity. Residues 525 to 541 (SISSGSIKDLINSPNKE) are compositionally biased toward polar residues. Over residues 544-557 (SKSQYPSSLSQSSS) the composition is skewed to low complexity. The segment covering 561 to 572 (MDTDVDSTDEFD) has biased composition (acidic residues). The segment covering 574–610 (GSNSNNNNNNNNNNNNNNNSNNSNNKKRNNSNNNNLG) has biased composition (low complexity). The 126-residue stretch at 997-1122 (WQNGFIFMFL…TIPVFKREPK (126 aa)) folds into the SH2 domain.

The protein belongs to the transcription factor STAT family. As to quaternary structure, homodimer. Does not form heterodimers with other family members.

The protein localises to the nucleus. Functionally, transcription factor that regulates gene expression during development. Required for optimal cell growth. The protein is Signal transducer and activator of transcription B (dstB) of Dictyostelium discoideum (Social amoeba).